We begin with the raw amino-acid sequence, 66 residues long: Large ribosomal subunit protein bL33c (66 aa).

Belongs to the bacterial ribosomal protein bL33 family.

It is found in the plastid. The protein resides in the chloroplast. The polypeptide is Large ribosomal subunit protein bL33c (Glycine max (Soybean)).